The following is a 920-amino-acid chain: Phosphoenolpyruvate carboxylase (920 aa).

Catalysis depends on residues His138 and Lys583.

This sequence belongs to the PEPCase type 1 family. It depends on Mg(2+) as a cofactor.

It catalyses the reaction oxaloacetate + phosphate = phosphoenolpyruvate + hydrogencarbonate. In terms of biological role, forms oxaloacetate, a four-carbon dicarboxylic acid source for the tricarboxylic acid cycle. This is Phosphoenolpyruvate carboxylase from Streptococcus pyogenes serotype M3 (strain ATCC BAA-595 / MGAS315).